A 1342-amino-acid chain; its full sequence is DNA-directed RNA polymerase subunit beta (1342 aa).

The protein belongs to the RNA polymerase beta chain family. In terms of assembly, the RNAP catalytic core consists of 2 alpha, 1 beta, 1 beta' and 1 omega subunit. When a sigma factor is associated with the core the holoenzyme is formed, which can initiate transcription.

It catalyses the reaction RNA(n) + a ribonucleoside 5'-triphosphate = RNA(n+1) + diphosphate. Its function is as follows. DNA-dependent RNA polymerase catalyzes the transcription of DNA into RNA using the four ribonucleoside triphosphates as substrates. The chain is DNA-directed RNA polymerase subunit beta from Pectobacterium carotovorum subsp. carotovorum (strain PC1).